Reading from the N-terminus, the 138-residue chain is MAPK kinase substrate protein At1g80180 (138 aa).

Positions 52–138 (TSEVQDQTTK…RKRPAKRRSR (87 aa)) are disordered. A compositionally biased stretch (basic and acidic residues) spans 69 to 81 (KPIRTDGGMERSR). At S98 the chain carries Phosphoserine. Position 105 is a phosphoserine; by MAPK6 (S105). Residues 121–138 (QPGKKVNQRKRPAKRRSR) show a composition bias toward basic residues.

In terms of tissue distribution, expressed in developing cotyledons, mature cotyledons, cotyledon epidermis and stomata.

Functionally, may play a role in the regulation of stomata patterning. In Arabidopsis thaliana (Mouse-ear cress), this protein is MAPK kinase substrate protein At1g80180.